A 295-amino-acid polypeptide reads, in one-letter code: Bifunctional protein FolD (295 aa).

NADP(+) is bound by residues 166 to 168, Ser-191, and Ile-232; that span reads GRS.

Belongs to the tetrahydrofolate dehydrogenase/cyclohydrolase family. As to quaternary structure, homodimer.

The catalysed reaction is (6R)-5,10-methylene-5,6,7,8-tetrahydrofolate + NADP(+) = (6R)-5,10-methenyltetrahydrofolate + NADPH. The enzyme catalyses (6R)-5,10-methenyltetrahydrofolate + H2O = (6R)-10-formyltetrahydrofolate + H(+). The protein operates within one-carbon metabolism; tetrahydrofolate interconversion. Its function is as follows. Catalyzes the oxidation of 5,10-methylenetetrahydrofolate to 5,10-methenyltetrahydrofolate and then the hydrolysis of 5,10-methenyltetrahydrofolate to 10-formyltetrahydrofolate. The protein is Bifunctional protein FolD of Rhodopseudomonas palustris (strain BisB18).